We begin with the raw amino-acid sequence, 303 residues long: Probable cell division protein WhiA (303 aa).

Residues 272–303 constitute a DNA-binding region (H-T-H motif); it reads SIQQLADSLSTPLTKSGVNHRLRKINKIADEL.

The protein belongs to the WhiA family.

Involved in cell division and chromosome segregation. This chain is Probable cell division protein WhiA, found in Streptococcus pneumoniae (strain ATCC 700669 / Spain 23F-1).